Here is a 188-residue protein sequence, read N- to C-terminus: Der GTPase-activating protein YihI (188 aa).

Disordered stretches follow at residues methionine 1–proline 80 and aspartate 162–phenylalanine 188. Over residues threonine 27–aspartate 37 the composition is skewed to basic and acidic residues. A compositionally biased stretch (polar residues) spans asparagine 47–glycine 57.

Belongs to the YihI family. As to quaternary structure, interacts with Der.

Functionally, a GTPase-activating protein (GAP) that modifies Der/EngA GTPase function. May play a role in ribosome biogenesis. This chain is Der GTPase-activating protein YihI, found in Yersinia pseudotuberculosis serotype O:3 (strain YPIII).